A 352-amino-acid chain; its full sequence is Maleylacetate reductase (352 aa).

Belongs to the iron-containing alcohol dehydrogenase family.

The catalysed reaction is 3-oxoadipate + NAD(+) = maleylacetate + NADH + H(+). The enzyme catalyses 3-oxoadipate + NADP(+) = maleylacetate + NADPH + H(+). The protein operates within aromatic compound metabolism; 3-chlorocatechol degradation. This Pseudomonas sp. (strain P51) protein is Maleylacetate reductase (tcbF).